Here is a 169-residue protein sequence, read N- to C-terminus: NAD(P)H-quinone oxidoreductase subunit J, chloroplastic (169 aa).

It belongs to the complex I 30 kDa subunit family. In terms of assembly, NDH is composed of at least 16 different subunits, 5 of which are encoded in the nucleus.

It localises to the plastid. It is found in the chloroplast thylakoid membrane. The enzyme catalyses a plastoquinone + NADH + (n+1) H(+)(in) = a plastoquinol + NAD(+) + n H(+)(out). It carries out the reaction a plastoquinone + NADPH + (n+1) H(+)(in) = a plastoquinol + NADP(+) + n H(+)(out). NDH shuttles electrons from NAD(P)H:plastoquinone, via FMN and iron-sulfur (Fe-S) centers, to quinones in the photosynthetic chain and possibly in a chloroplast respiratory chain. The immediate electron acceptor for the enzyme in this species is believed to be plastoquinone. Couples the redox reaction to proton translocation, and thus conserves the redox energy in a proton gradient. The polypeptide is NAD(P)H-quinone oxidoreductase subunit J, chloroplastic (Staurastrum punctulatum (Green alga)).